We begin with the raw amino-acid sequence, 560 residues long: Aluminum-activated malate transporter 12 (560 aa).

The next 6 membrane-spanning stretches (helical) occupy residues 54-74 (VGLS…FKGI), 78-98 (AIWA…ATLC), 104-124 (GLGT…ANDS), 130-150 (AIFI…IRFI), 156-176 (NYDY…VSSY), and 189-209 (FYTI…VFPI). The segment at 386-421 (LHRHNNKHQNGSISNNKHHQRNSSNSGKDLNGDVSL) is disordered. The segment covering 407–421 (NSSNSGKDLNGDVSL) has biased composition (polar residues).

Belongs to the aromatic acid exporter (TC 2.A.85) family. As to expression, expressed in roots, stems, leaves, flowers and pollen. Mainly detected in the roots vascular stele and in the leaves guard cells.

Its subcellular location is the cell membrane. Its function is as follows. Malate-sensitive anion transporter permeable to chloride, nitrate, sulfate and malate. Involved in dark-, CO(2)-, abscisic acid- and water-deficient-induced stomatal closure. Belongs to the R-type anion channels. The chain is Aluminum-activated malate transporter 12 (ALMT12) from Arabidopsis thaliana (Mouse-ear cress).